We begin with the raw amino-acid sequence, 364 residues long: Glycine oxidase (364 aa).

FAD contacts are provided by residues 12 to 13 (VI), 32 to 33 (ER), 40 to 41 (AS), 45 to 47 (GGI), and valine 173. Arginine 302 lines the substrate pocket. 327-333 (HYRNGLV) provides a ligand contact to FAD.

The protein belongs to the DAO family. ThiO subfamily. In terms of assembly, monomer. It depends on FAD as a cofactor.

It catalyses the reaction glycine + O2 + H2O = glyoxylate + H2O2 + NH4(+). It carries out the reaction sarcosine + O2 + H2O = methylamine + glyoxylate + H2O2. The protein operates within cofactor biosynthesis; thiamine diphosphate biosynthesis. In terms of biological role, catalyzes the oxidation of glycine, leading to glyoxyl imine and hydrogen peroxide as primary products; glyoxyl imine is used for the biosynthesis of the thiazole ring of thiamine. Otherwise, glyoxyl imine is spontaneously hydrolyzed in water to produce glyoxylate and ammonia. Can also use sarcosine (N-methylglycine) as substrate. In Pseudomonas aeruginosa (strain ATCC 15692 / DSM 22644 / CIP 104116 / JCM 14847 / LMG 12228 / 1C / PRS 101 / PAO1), this protein is Glycine oxidase.